Reading from the N-terminus, the 334-residue chain is tRNA-dihydrouridine(20/20a) synthase (334 aa).

Residues 17 to 19 (PMM) and glutamine 70 contribute to the FMN site. The Proton donor role is filled by cysteine 100. FMN-binding positions include lysine 139, histidine 171, 211 to 213 (NGG), and 233 to 234 (GR).

Belongs to the Dus family. DusA subfamily. Requires FMN as cofactor.

The enzyme catalyses 5,6-dihydrouridine(20) in tRNA + NADP(+) = uridine(20) in tRNA + NADPH + H(+). It carries out the reaction 5,6-dihydrouridine(20) in tRNA + NAD(+) = uridine(20) in tRNA + NADH + H(+). The catalysed reaction is 5,6-dihydrouridine(20a) in tRNA + NADP(+) = uridine(20a) in tRNA + NADPH + H(+). It catalyses the reaction 5,6-dihydrouridine(20a) in tRNA + NAD(+) = uridine(20a) in tRNA + NADH + H(+). Catalyzes the synthesis of 5,6-dihydrouridine (D), a modified base found in the D-loop of most tRNAs, via the reduction of the C5-C6 double bond in target uridines. Specifically modifies U20 and U20a in tRNAs. The chain is tRNA-dihydrouridine(20/20a) synthase (dus2) from Synechocystis sp. (strain ATCC 27184 / PCC 6803 / Kazusa).